Here is a 266-residue protein sequence, read N- to C-terminus: Tryptophan synthase alpha chain (266 aa).

Catalysis depends on proton acceptor residues glutamate 49 and aspartate 60.

The protein belongs to the TrpA family. Tetramer of two alpha and two beta chains.

The enzyme catalyses (1S,2R)-1-C-(indol-3-yl)glycerol 3-phosphate + L-serine = D-glyceraldehyde 3-phosphate + L-tryptophan + H2O. Its pathway is amino-acid biosynthesis; L-tryptophan biosynthesis; L-tryptophan from chorismate: step 5/5. The alpha subunit is responsible for the aldol cleavage of indoleglycerol phosphate to indole and glyceraldehyde 3-phosphate. In Chloroflexus aurantiacus (strain ATCC 29364 / DSM 637 / Y-400-fl), this protein is Tryptophan synthase alpha chain.